Reading from the N-terminus, the 1135-residue chain is Envelopment polyprotein (1135 aa).

The N-terminal stretch at 1–35 (MRILKLLELVVKVSLFTIALSSVLLAFLTFRATDA) is a signal peptide. At 36 to 314 (KVEIIRGDHP…KYSKSIYKQT (279 aa)) the chain is on the lumenal side. The Cell attachment site motif lies at 41-43 (RGD). Residue N116 is glycosylated (N-linked (GlcNAc...) asparagine; by host). C122 and C156 are disulfide-bonded. The tract at residues 177 to 195 (LDNKRHFSVGTNFFIPESL) is non-covalent dimerization. The N-linked (GlcNAc...) asparagine; by host glycan is linked to N210. C224 and C285 are joined by a disulfide. The chain crosses the membrane as a helical span at residues 315–366 (ACINFSWIRLILIALLIYFPIRWLVNKTTKPLFLWYDLMGLITYPVLLLINC). Residues 367–484 (LWKYFPFKCS…VPGCPFLVTS (118 aa)) are Cytoplasmic-facing. The segment at 437 to 484 (LSLSLLKFVTEILIGLVILSQIPMSMAQTTQCLSGCFYVPGCPFLVTS) is signal for signal peptide peptidase. Over 485 to 1067 (KFEKCPEKDQ…YFGSFFDTIR (583 aa)) the chain is Lumenal. N588, N605, and N980 each carry an N-linked (GlcNAc...) asparagine; by host glycan. A helical transmembrane segment spans residues 1068–1088 (VVLLIAFIFLVIYFCSILTSI). Topologically, residues 1089–1135 (CKGYVKHKSYKSRSKIEDDDEPEIKAPMLMKDTMTRRRPPMDFSHLV) are cytoplasmic.

The protein belongs to the tospovirus envelope glycoprotein family. As to quaternary structure, homodimer; disulfide-linked. Heterodimer with Glycoprotein C. Interacts with nucleoprotein. In terms of assembly, heterodimer with Glycoprotein N. Interacts with nucleoprotein. Post-translationally, specific enzymatic cleavages in vivo yield mature proteins including Glycoprotein N and Glycoprotein C. Glycosylated with O-linked glycans. Glycosylation is essential for proper subcellular location. In terms of processing, cleaved at acidic pH.

It is found in the virion membrane. Its subcellular location is the host Golgi apparatus membrane. The protein localises to the host endoplasmic reticulum membrane. Its function is as follows. Forms the spikes present at the surface of the virion together with Glycoprotein C. They are able to attach the virion to a cell receptor and to promote fusion of membranes after endocytosis of the virion. Plays a role in virus binding and/or entry into the vector midgut. In terms of biological role, forms the spikes present at the surface of the virion together with Glycoprotein N. They are able to attach the virion to a cell receptor and to promote fusion of membranes after endocytosis of the virion. Probable class II fusion protein. This Frankliniella occidentalis (Western flower thrips) protein is Envelopment polyprotein (GP).